A 43-amino-acid polypeptide reads, in one-letter code: Gene 75 protein (43 aa).

This is Gene 75 protein (75) from Mycobacterium (Mycobacteriophage L5).